We begin with the raw amino-acid sequence, 228 residues long: Lipoprotein-releasing system ATP-binding protein LolD (228 aa).

The ABC transporter domain maps to 6–228; the sequence is LRLSGIEKTY…LSDGRLSAES (223 aa). Residue 43–50 participates in ATP binding; the sequence is APSGAGKS.

This sequence belongs to the ABC transporter superfamily. Lipoprotein translocase (TC 3.A.1.125) family. The complex is composed of two ATP-binding proteins (LolD) and two transmembrane proteins (LolC and LolE).

It is found in the cell inner membrane. Functionally, part of the ABC transporter complex LolCDE involved in the translocation of mature outer membrane-directed lipoproteins, from the inner membrane to the periplasmic chaperone, LolA. Responsible for the formation of the LolA-lipoprotein complex in an ATP-dependent manner. The polypeptide is Lipoprotein-releasing system ATP-binding protein LolD (Ruegeria pomeroyi (strain ATCC 700808 / DSM 15171 / DSS-3) (Silicibacter pomeroyi)).